Here is a 741-residue protein sequence, read N- to C-terminus: Eukaryotic translation initiation factor 3 subunit B (741 aa).

Polar residues predominate over residues 1 to 10; that stretch reads MAPSFDTLSE. Residues 1–21 are disordered; sequence MAPSFDTLSEQDLHEEEEEEI. The region spanning 40 to 126 is the RRM domain; it reads TFIVIDGLPI…HTLAVNKLMD (87 aa). 5 WD repeats span residues 193–230, 232–289, 303–344, 514–557, and 572–610; these read AHWT…KQKQ, PHPF…RSFV, APKK…LLGK, IEKK…EKAE, and VEHY…HTFA. The tract at residues 696 to 723 is disordered; it reads DAYGIPEDADDAKVAKDAPPVSEDQGEA.

Belongs to the eIF-3 subunit B family. Component of the eukaryotic translation initiation factor 3 (eIF-3) complex.

It is found in the cytoplasm. Functionally, RNA-binding component of the eukaryotic translation initiation factor 3 (eIF-3) complex, which is involved in protein synthesis of a specialized repertoire of mRNAs and, together with other initiation factors, stimulates binding of mRNA and methionyl-tRNAi to the 40S ribosome. The eIF-3 complex specifically targets and initiates translation of a subset of mRNAs involved in cell proliferation. The protein is Eukaryotic translation initiation factor 3 subunit B (prt1) of Aspergillus oryzae (strain ATCC 42149 / RIB 40) (Yellow koji mold).